A 710-amino-acid polypeptide reads, in one-letter code: Choline transporter-like protein 2 (710 aa).

Topologically, residues 1–34 are cytoplasmic; that stretch reads MEDDGKSPPDSAYGEPKKYDPNFKGPIQNRGCTD. The chain crosses the membrane as a helical span at residues 35 to 55; the sequence is ILCCILIVLGIIAYVAVGIVA. The Extracellular segment spans residues 56–236; it reads WTYGDPRKVI…KIFEDYTVSW (181 aa). N-linked (GlcNAc...) asparagine glycans are attached at residues asparagine 147, asparagine 190, and asparagine 204. A helical membrane pass occupies residues 237–257; sequence YWIIIGLIIAMVISLIFVVLL. Topologically, residues 258–260 are cytoplasmic; it reads RFL. Residues 261 to 281 form a helical membrane-spanning segment; it reads AGIMVWVMIVLVIAVMGYGIF. Residues 282-319 are Extracellular-facing; that stretch reads HCYMEYARLKGQSGSDVTLKDIGFQTDIRVYLHLRQTW. A helical membrane pass occupies residues 320-340; it reads LAFMIILCILEVIVILLLIFL. Residues 341–368 lie on the Cytoplasmic side of the membrane; the sequence is RKRIMIAIALIKEASRAVGFVMSSLVFP. The chain crosses the membrane as a helical span at residues 369-389; the sequence is LFTFLLVCLCIAYWAITAVFL. At 390-458 the chain is on the extracellular side; it reads STSNEAVYKV…FQIYNAFMFL (69 aa). Residues asparagine 401, asparagine 418, and asparagine 421 are each glycosylated (N-linked (GlcNAc...) asparagine). The chain crosses the membrane as a helical span at residues 459 to 481; the sequence is WLANFVIALGQVTLAGAFASYYW. Over 482 to 508 the chain is Cytoplasmic; sequence AFKKPDDMPAFPIFSSLGRALRYHTGS. Residues 509–529 form a helical membrane-spanning segment; the sequence is LAFGSLILAIVQMIRILLEYL. At 530–567 the chain is on the extracellular side; the sequence is DHKLKGADNKCARFLLCCLKCCFWCLEKFIKFLNRNAY. Residues 568–588 traverse the membrane as a helical segment; the sequence is IMIAIYGTNFCTSARNAFFLL. Residues 589–603 are Cytoplasmic-facing; it reads MRNIIRVAVLDKVTD. The helical transmembrane segment at 604–624 threads the bilayer; the sequence is FLLFLGKLLVVGCVGILAFFF. Topologically, residues 625 to 642 are extracellular; the sequence is FSRRIQIVQDTAPTLNYY. A helical transmembrane segment spans residues 643–663; that stretch reads WVPILTVILGSYLIAHGFFSV. The Cytoplasmic segment spans residues 664–710; that stretch reads YGMCVDTLFLCFLEDLERNDGSTERPYFMSGSLQKLLNKSNQTKPDK.

This sequence belongs to the CTL (choline transporter-like) family.

The protein localises to the cell membrane. It localises to the mitochondrion outer membrane. The enzyme catalyses choline(out) + n H(+)(in) = choline(in) + n H(+)(out). The catalysed reaction is ethanolamine(out) + n H(+)(in) = ethanolamine(in) + n H(+)(out). Choline/H+ antiporter, mainly in mitochodria. Also acts as a low-affinity ethanolamine/H+ antiporter, regulating the supply of extracellular ethanolamine (Etn) for the CDP-Etn pathway, redistribute intracellular Etn and balance the CDP-Cho and CDP-Etn arms of the Kennedy pathway. This Xenopus laevis (African clawed frog) protein is Choline transporter-like protein 2 (slc44a2).